The following is a 776-amino-acid chain: Ecdysone receptor (776 aa).

The segment at 1–290 is modulating; it reads MYRLNIVSTN…GPTPRQQEEL (290 aa). Positions 199 to 283 are disordered; sequence NEEWISSPSP…DAKKQKKGPT (85 aa). Over residues 204-213 the composition is skewed to low complexity; it reads SSPSPGSVPG. Composition is skewed to polar residues over residues 227–245 and 261–270; these read TTYT…STGS and SPSSSLNGYT. The segment at residues 288-363 is a DNA-binding region (nuclear receptor); sequence EELCLVCGDR…VGMRPECVVP (76 aa). 2 NR C4-type zinc fingers span residues 291–311 and 327–346; these read CLVC…CEGC and CKFG…CQEC. One can recognise an NR LBD domain in the interval 437 to 673; the sequence is NQMAVIYKLI…FLEEIWDVQD (237 aa). Positions 679–688 are enriched in polar residues; it reads QAQMHSHGTQ. A disordered region spans residues 679–776; the sequence is QAQMHSHGTQ…VPGLGMLDQV (98 aa). Residues 689-745 are compositionally biased toward low complexity; it reads SSSSSSSSSSSSSNGSSNGNSSSNSNSSQHGPHPHPHGQQLTPNQQQHQQQHSQLQQ.

This sequence belongs to the nuclear hormone receptor family. NR1 subfamily. In terms of assembly, heterodimer of USP and ECR. Only the heterodimer is capable of high-affinity binding to ecdysone. As to expression, a peak level expression is seen in the fat body of previtellogenic female mosquitos at one and two days after eclosion, levels fall three-fold at three days posteclosion.

The protein resides in the nucleus. Its function is as follows. Receptor for ecdysone. Binds to ecdysone response elements (ECRES). The sequence is that of Ecdysone receptor (EcR) from Aedes aegypti (Yellowfever mosquito).